A 332-amino-acid polypeptide reads, in one-letter code: Autoinducer 2 import system permease protein LsrD (332 aa).

Helical transmembrane passes span 7–27 (YSWE…FGVI), 45–65 (ICIG…GMDI), 70–90 (TIGL…PLPL), 91–111 (AIII…GLII), 118–138 (LVIT…LSGM), 162–182 (FLGI…FWLL), 216–236 (VYAM…SYFG), 240–260 (SDLG…GGAN), 261–281 (IYGG…VGFL), and 288–308 (AGVP…VVVV).

Belongs to the binding-protein-dependent transport system permease family. AraH/RbsC subfamily. As to quaternary structure, the complex is composed of two ATP-binding proteins (LsrA), two transmembrane proteins (LsrC and LsrD) and a solute-binding protein (LsrB).

The protein localises to the cell inner membrane. In terms of biological role, part of the ABC transporter complex LsrABCD involved in autoinducer 2 (AI-2) import. Probably responsible for the translocation of the substrate across the membrane. The polypeptide is Autoinducer 2 import system permease protein LsrD (lsrD) (Salmonella paratyphi A (strain ATCC 9150 / SARB42)).